Reading from the N-terminus, the 415-residue chain is Putative competence-damage inducible protein (415 aa).

The protein belongs to the CinA family.

The sequence is that of Putative competence-damage inducible protein from Limosilactobacillus reuteri (strain DSM 20016) (Lactobacillus reuteri).